Here is a 290-residue protein sequence, read N- to C-terminus: Glycine--tRNA ligase alpha subunit (290 aa).

Belongs to the class-II aminoacyl-tRNA synthetase family. As to quaternary structure, tetramer of two alpha and two beta subunits.

It is found in the cytoplasm. It catalyses the reaction tRNA(Gly) + glycine + ATP = glycyl-tRNA(Gly) + AMP + diphosphate. The sequence is that of Glycine--tRNA ligase alpha subunit from Zymomonas mobilis subsp. mobilis (strain ATCC 31821 / ZM4 / CP4).